A 415-amino-acid polypeptide reads, in one-letter code: AP-3 complex subunit mu (415 aa).

Residues 178 to 414 (SNEVYVDLVE…QTRAGEFDVR (237 aa)) enclose the MHD domain.

This sequence belongs to the adaptor complexes medium subunit family. In terms of assembly, adaptor protein complex 3 (AP-3) is a heterotetramer composed of two large adaptins (delta-type subunit and beta-type subunit), a medium adaptin (mu-type subunit) and a small adaptin (sigma-type subunit).

Its subcellular location is the cytoplasm. It is found in the golgi apparatus. It localises to the cytoplasmic vesicle membrane. Functionally, part of the AP-3 complex, an adaptor-related complex which seems to be clathrin-associated. The complex is associated with the Golgi region as well as more peripheral structures. It facilitates the budding of vesicles from the Golgi membrane and may be directly involved in trafficking to the vacuole. It also functions in maintaining the identity of lytic vacuoles and in regulating the transition between storage and lytic vacuoles. This is AP-3 complex subunit mu (AP3M) from Arabidopsis thaliana (Mouse-ear cress).